Here is a 441-residue protein sequence, read N- to C-terminus: Probable pyridine nucleotide-disulfide oxidoreductase RclA (441 aa).

An FAD-binding site is contributed by 33-43 (EQSNAMYGGTC). The cysteines at positions 43 and 48 are disulfide-linked. His426 (proton acceptor) is an active-site residue.

The protein belongs to the class-I pyridine nucleotide-disulfide oxidoreductase family. The cofactor is FAD.

Its function is as follows. Probably involved in reactive chlorine species (RCS) stress resistance. In Escherichia coli (strain K12), this protein is Probable pyridine nucleotide-disulfide oxidoreductase RclA (rclA).